We begin with the raw amino-acid sequence, 175 residues long: NADH-ubiquinone oxidoreductase chain 6 (175 aa).

5 helical membrane passes run 1–21 (MMTYIVFILSVIFVVSFVGFS), 25–45 (SPIYGGLVLIVSGGVGCGIIM), 47–67 (FGGSFLGLMVFLIYLGGMLVV), 88–108 (TVMGVFLLGLLMEVMLVLYVL), and 149–169 (YGAWVVIVTGWSLLVGVLVIL).

It belongs to the complex I subunit 6 family. As to quaternary structure, core subunit of respiratory chain NADH dehydrogenase (Complex I) which is composed of 45 different subunits.

The protein localises to the mitochondrion inner membrane. It catalyses the reaction a ubiquinone + NADH + 5 H(+)(in) = a ubiquinol + NAD(+) + 4 H(+)(out). Its function is as follows. Core subunit of the mitochondrial membrane respiratory chain NADH dehydrogenase (Complex I) which catalyzes electron transfer from NADH through the respiratory chain, using ubiquinone as an electron acceptor. Essential for the catalytic activity and assembly of complex I. The chain is NADH-ubiquinone oxidoreductase chain 6 (MT-ND6) from Equus caballus (Horse).